A 198-amino-acid chain; its full sequence is Probable GTP-binding protein EngB (198 aa).

The 174-residue stretch at 22–195 (NRNEVAFVGR…IDKLFLEFAT (174 aa)) folds into the EngB-type G domain. GTP-binding positions include 30 to 37 (GRSNVGKS), 57 to 61 (GKTRL), 75 to 78 (DLPG), 142 to 145 (TKSD), and 174 to 176 (YSS). The Mg(2+) site is built by S37 and T59.

This sequence belongs to the TRAFAC class TrmE-Era-EngA-EngB-Septin-like GTPase superfamily. EngB GTPase family. The cofactor is Mg(2+).

Necessary for normal cell division and for the maintenance of normal septation. The protein is Probable GTP-binding protein EngB of Clostridium botulinum (strain Alaska E43 / Type E3).